A 302-amino-acid chain; its full sequence is Pathogenicity locus probable regulatory protein HrpS (302 aa).

Residues 9–237 enclose the Sigma-54 factor interaction domain; the sequence is DDLDEERVPN…LKAAAKRHVL (229 aa). ATP is bound by residues 37 to 44 and 99 to 108; these read GETGTGKD and AQGGTLYLDE. The H-T-H motif DNA-binding region spans 279-298; that stretch reads IDAASLELDMPRRTLYRRIK.

Functionally, member of the two-component regulatory system HrpR/HrpS that regulates the activation of the sigma factor hrpL which itself induces the expression of hprD as well as other hrp loci which are involved in plant pathogenicity, hrmA and avr genes. Probably interacts with sigma-54. The chain is Pathogenicity locus probable regulatory protein HrpS (hrpS) from Pseudomonas savastanoi pv. phaseolicola (Pseudomonas syringae pv. phaseolicola).